Here is a 100-residue protein sequence, read N- to C-terminus: MQFSIATIALFLSSAMAAPYSGNSNSDSYDPCTGLLQKSPQCCNTDILGVANLDCHGPPSVPTSPSQFQASCVADGGRSARCCTLSLLGLALVCTDPVGI.

Positions 1–25 (MQFSIATIALFLSSAMAAPYSGNSN) are cleaved as a signal peptide. 4 cysteine pairs are disulfide-bonded: Cys-32/Cys-82, Cys-42/Cys-72, Cys-43/Cys-55, and Cys-83/Cys-94.

It belongs to the cerato-ulmin hydrophobin family. In terms of assembly, homotetramer. Further self-assembles to form highly ordered films at water-air interfaces through intermolecular interactions.

The protein resides in the secreted. Its subcellular location is the cell wall. In terms of biological role, aerial growth, conidiation, and dispersal of filamentous fungi in the environment rely upon a capability of their secreting small amphipathic proteins called hydrophobins (HPBs) with low sequence identity. Class I can self-assemble into an outermost layer of rodlet bundles on aerial cell surfaces, conferring cellular hydrophobicity that supports fungal growth, development and dispersal; whereas Class II form highly ordered films at water-air interfaces through intermolecular interactions but contribute nothing to the rodlet structure. CU is a class II hydrophobin that is implicated in the pathogenicity of this fungus on elm trees. Required for hydrophobicity and adherence of the cells and acts as a parasitic fitness factor by protecting infectious propagules from desiccation. Reduces the interfacial tension of both oil-water and air-water interfaces. This is Class II hydrophobin CU from Ophiostoma ulmi (Dutch elm disease fungus).